The chain runs to 182 residues: Regulatory protein RecX (182 aa).

A disordered region spans residues 12–54; the sequence is LSQRDHSESELRRKLAAPPFSAKGNWGKRSGAKSSNLVESNPV. Positions 13–24 are enriched in basic and acidic residues; the sequence is SQRDHSESELRR. The span at 43–54 shows a compositional bias: polar residues; it reads AKSSNLVESNPV.

It belongs to the RecX family.

The protein resides in the cytoplasm. Its function is as follows. Modulates RecA activity. This Yersinia pseudotuberculosis serotype I (strain IP32953) protein is Regulatory protein RecX.